The primary structure comprises 307 residues: N-acetylmuramic acid 6-phosphate etherase (307 aa).

The SIS domain maps to 62–225 (VVDAFRVGGR…TTASMIRIGK (164 aa)). Catalysis depends on Glu90, which acts as the Proton donor. Glu121 is a catalytic residue.

It belongs to the GCKR-like family. MurNAc-6-P etherase subfamily. As to quaternary structure, homodimer.

The catalysed reaction is N-acetyl-D-muramate 6-phosphate + H2O = N-acetyl-D-glucosamine 6-phosphate + (R)-lactate. The protein operates within amino-sugar metabolism; 1,6-anhydro-N-acetylmuramate degradation. It functions in the pathway amino-sugar metabolism; N-acetylmuramate degradation. Its pathway is cell wall biogenesis; peptidoglycan recycling. Specifically catalyzes the cleavage of the D-lactyl ether substituent of MurNAc 6-phosphate, producing GlcNAc 6-phosphate and D-lactate. Together with AnmK, is also required for the utilization of anhydro-N-acetylmuramic acid (anhMurNAc) either imported from the medium or derived from its own cell wall murein, and thus plays a role in cell wall recycling. This is N-acetylmuramic acid 6-phosphate etherase from Brucella anthropi (strain ATCC 49188 / DSM 6882 / CCUG 24695 / JCM 21032 / LMG 3331 / NBRC 15819 / NCTC 12168 / Alc 37) (Ochrobactrum anthropi).